Reading from the N-terminus, the 426-residue chain is Probable imidazolonepropionase (426 aa).

4-imidazolone-5-propanoate-binding residues include tyrosine 159 and histidine 192. Tyrosine 159 serves as a coordination point for N-formimidoyl-L-glutamate. Histidine 260 contacts Fe(3+). A Zn(2+)-binding site is contributed by histidine 260. Glutamate 263 contributes to the 4-imidazolone-5-propanoate binding site. Residue aspartate 334 coordinates Fe(3+). Zn(2+) is bound at residue aspartate 334. Asparagine 336 provides a ligand contact to N-formimidoyl-L-glutamate.

Belongs to the metallo-dependent hydrolases superfamily. HutI family. The cofactor is Zn(2+). It depends on Fe(3+) as a cofactor.

It carries out the reaction 4-imidazolone-5-propanoate + H2O = N-formimidoyl-L-glutamate. The protein operates within amino-acid degradation; L-histidine degradation into L-glutamate; N-formimidoyl-L-glutamate from L-histidine: step 3/3. This is Probable imidazolonepropionase (Amdhd1) from Mus musculus (Mouse).